The following is a 284-amino-acid chain: GPN-loop GTPase 3 (284 aa).

13–18 is a binding site for GTP; that stretch reads GSGKST. The Gly-Pro-Asn (GPN)-loop; involved in dimer interface motif lies at 72–74; that stretch reads GPN. A GTP-binding site is contributed by 174–177; that stretch reads TKMD. Positions 261-284 are disordered; sequence KEPKEHEDESSSMFDEYFQEHQNE.

The protein belongs to the GPN-loop GTPase family. As to quaternary structure, heterodimer with GPN1. Binds to RNA polymerase II (RNAPII). Interacts directly with subunits RPB4 and RPB7 and the CTD of RPB1.

In terms of biological role, small GTPase required for proper localization of RNA polymerase II (RNAPII). May act at an RNAP assembly step prior to nuclear import. This Bos taurus (Bovine) protein is GPN-loop GTPase 3.